The chain runs to 279 residues: Acetylglutamate kinase (279 aa).

Residues 64 to 65 (GG), Arg-86, and Asn-177 each bind substrate.

Belongs to the acetylglutamate kinase family. ArgB subfamily.

It localises to the cytoplasm. It carries out the reaction N-acetyl-L-glutamate + ATP = N-acetyl-L-glutamyl 5-phosphate + ADP. It participates in amino-acid biosynthesis; L-arginine biosynthesis; N(2)-acetyl-L-ornithine from L-glutamate: step 2/4. Functionally, catalyzes the ATP-dependent phosphorylation of N-acetyl-L-glutamate. This is Acetylglutamate kinase from Campylobacter jejuni (strain RM1221).